Consider the following 626-residue polypeptide: Carnitine O-acetyltransferase (626 aa).

Lys-93 is modified (N6-succinyllysine). Lys-261 is subject to N6-acetyllysine; alternate. N6-succinyllysine; alternate is present on Lys-261. Residue Lys-268 is modified to N6-acetyllysine. His-343 acts as the Proton acceptor in catalysis. Residues Lys-419 and 423–430 (KSQKLSPD) contribute to the CoA site. Residues Tyr-452 and Ser-454 each contribute to the (R)-carnitine site. CoA is bound at residue Ser-456. (R)-carnitine is bound at residue Thr-465. CoA-binding residues include Arg-504 and Gln-555. A Microbody targeting signal motif is present at residues 624–626 (AKL).

The protein belongs to the carnitine/choline acetyltransferase family. Monomer. In terms of tissue distribution, expressed in flagella of epididymal sperm.

Its subcellular location is the endoplasmic reticulum. It is found in the peroxisome. It localises to the mitochondrion inner membrane. It catalyses the reaction (R)-carnitine + acetyl-CoA = O-acetyl-(R)-carnitine + CoA. The catalysed reaction is propanoyl-CoA + (R)-carnitine = O-propanoyl-(R)-carnitine + CoA. It carries out the reaction butanoyl-CoA + (R)-carnitine = O-butanoyl-(R)-carnitine + CoA. The enzyme catalyses hexanoyl-CoA + (R)-carnitine = O-hexanoyl-(R)-carnitine + CoA. It catalyses the reaction octanoyl-CoA + (R)-carnitine = O-octanoyl-(R)-carnitine + CoA. The catalysed reaction is decanoyl-CoA + (R)-carnitine = O-decanoyl-(R)-carnitine + CoA. It carries out the reaction 3-methylbutanoyl-CoA + (R)-carnitine = O-3-methylbutanoyl-(R)-carnitine + CoA. The enzyme catalyses 2-methylpropanoyl-CoA + (R)-carnitine = O-isobutanoyl-(R)-carnitine + CoA. It catalyses the reaction 2-methylbutanoyl-CoA + (R)-carnitine = O-2-methylbutanoyl-(R)-carnitine + CoA. The catalysed reaction is acetoacetyl-CoA + (R)-carnitine = O-3-oxobutanoyl-(R)-carnitine + CoA. It carries out the reaction 3-hydroxybutanoyl-CoA + (R)-carnitine = O-3-hydroxybutanoyl-(R)-carnitine + CoA. The enzyme catalyses 4,8-dimethylnonanoyl-CoA + (R)-carnitine = O-4,8-dimethylnonanoyl-(R)-carnitine + CoA. It catalyses the reaction 2,6-dimethylheptanoyl-CoA + (R)-carnitine = O-2,6-dimethylheptanoyl-(R)-carnitine + CoA. Functionally, catalyzes the reversible transfer of acyl groups from carnitine to coenzyme A (CoA) and regulates the acyl-CoA/CoA ratio. Also plays a crucial role in the transport of fatty acids for beta-oxidation. Responsible for the synthesis of short- and branched-chain acylcarnitines. Active towards some branched-chain amino acid oxidation pathway (BCAAO) intermediates. Trans-2-enoyl-CoAs and 2-methylacyl-CoAs are poor substrates. This is Carnitine O-acetyltransferase from Rattus norvegicus (Rat).